The chain runs to 174 residues: Nucleoside-triphosphatase THEP1 (174 aa).

ATP-binding positions include 15 to 22 (GMPGVGKT) and 102 to 109 (LAIVDEIG).

It belongs to the THEP1 NTPase family.

It catalyses the reaction a ribonucleoside 5'-triphosphate + H2O = a ribonucleoside 5'-diphosphate + phosphate + H(+). Has nucleotide phosphatase activity towards ATP, GTP, CTP, TTP and UTP. May hydrolyze nucleoside diphosphates with lower efficiency. The protein is Nucleoside-triphosphatase THEP1 of Pyrobaculum islandicum (strain DSM 4184 / JCM 9189 / GEO3).